Here is a 257-residue protein sequence, read N- to C-terminus: Zinc transporter ZupT (257 aa).

8 helical membrane passes run 5-25 (LILT…GVLG), 32-52 (VLAF…LMEM), 61-81 (GMSP…YFGL), 109-129 (AILL…ATFV), 137-157 (LGFG…LAVA), 171-191 (IFWA…AWLI), 195-215 (LVSP…MVAL), and 236-256 (GVLC…TIGI). Fe(2+) is bound by residues asparagine 120 and glutamate 123. Residues glutamate 123 and histidine 148 each coordinate Zn(2+). Fe(2+)-binding residues include asparagine 149, glutamate 152, and glutamate 181. Zn(2+) is bound at residue glutamate 152.

It belongs to the ZIP transporter (TC 2.A.5) family. ZupT subfamily.

Its subcellular location is the cell inner membrane. It catalyses the reaction Zn(2+)(in) = Zn(2+)(out). Its function is as follows. Mediates zinc uptake. May also transport other divalent cations. This chain is Zinc transporter ZupT, found in Salmonella agona (strain SL483).